We begin with the raw amino-acid sequence, 168 residues long: uncharacterized protein (168 aa).

One can recognise an N-acetyltransferase domain in the interval Glu7–Met168.

This is an uncharacterized protein from Azospirillum brasilense.